We begin with the raw amino-acid sequence, 537 residues long: Probable feruloyl esterase ARB_07085 (537 aa).

Residues methionine 1–serine 22 form the signal peptide. N-linked (GlcNAc...) asparagine glycans are attached at residues asparagine 67, asparagine 76, and asparagine 189. 3 disulfides stabilise this stretch: cysteine 196–cysteine 459, cysteine 263–cysteine 280, and cysteine 508–cysteine 529. Serine 197 functions as the Acyl-ester intermediate in the catalytic mechanism. Residues aspartate 264, aspartate 267, valine 269, aspartate 271, and valine 273 each coordinate Ca(2+). The N-linked (GlcNAc...) asparagine glycan is linked to asparagine 339. Catalysis depends on charge relay system residues aspartate 419 and histidine 458.

This sequence belongs to the tannase family.

It localises to the secreted. It carries out the reaction feruloyl-polysaccharide + H2O = ferulate + polysaccharide.. Hydrolyzes the feruloyl-arabinose ester bond in arabinoxylans as well as the feruloyl-galactose and feruloyl-arabinose ester bonds. The polypeptide is Probable feruloyl esterase ARB_07085 (Arthroderma benhamiae (strain ATCC MYA-4681 / CBS 112371) (Trichophyton mentagrophytes)).